The sequence spans 79 residues: Small ribosomal subunit protein eS17 (79 aa).

The protein belongs to the eukaryotic ribosomal protein eS17 family.

This chain is Small ribosomal subunit protein eS17, found in Saccharolobus islandicus (strain Y.N.15.51 / Yellowstone #2) (Sulfolobus islandicus).